We begin with the raw amino-acid sequence, 377 residues long: Chaperone protein DnaJ (377 aa).

Residues 5–70 (DYYEILGVSK…QKRAAYDQYG (66 aa)) form the J domain. The CR-type zinc finger occupies 132 to 210 (GVTKEIRIPT…CHGHGRVEKT (79 aa)). Cysteine 145, cysteine 148, cysteine 162, cysteine 165, cysteine 184, cysteine 187, cysteine 198, and cysteine 201 together coordinate Zn(2+). CXXCXGXG motif repeat units follow at residues 145-152 (CDVCHGSG), 162-169 (CPTCHGAG), 184-191 (CPHCQGRG), and 198-205 (CNKCHGHG).

It belongs to the DnaJ family. As to quaternary structure, homodimer. Zn(2+) serves as cofactor.

It is found in the cytoplasm. In terms of biological role, participates actively in the response to hyperosmotic and heat shock by preventing the aggregation of stress-denatured proteins and by disaggregating proteins, also in an autonomous, DnaK-independent fashion. Unfolded proteins bind initially to DnaJ; upon interaction with the DnaJ-bound protein, DnaK hydrolyzes its bound ATP, resulting in the formation of a stable complex. GrpE releases ADP from DnaK; ATP binding to DnaK triggers the release of the substrate protein, thus completing the reaction cycle. Several rounds of ATP-dependent interactions between DnaJ, DnaK and GrpE are required for fully efficient folding. Also involved, together with DnaK and GrpE, in the DNA replication of plasmids through activation of initiation proteins. This chain is Chaperone protein DnaJ, found in Klebsiella pneumoniae (strain 342).